Consider the following 225-residue polypeptide: Insulin-induced gene 2 protein (225 aa).

The Cytoplasmic segment spans residues 1 to 28 (MAEGETESPRPKKCGPYISSVTSQSVNV). A helical transmembrane segment spans residues 29 to 51 (VIRGVVLFFIGVFLALVLNLLQI). The Lumenal portion of the chain corresponds to 52–70 (QRNVTLFPPDVITSIFSSA). A helical transmembrane segment spans residues 71 to 88 (WWVPPCCGTASAVIGLLY). At 89 to 103 (PCIDRHLGEPHKFKR) the chain is on the cytoplasmic side. A helical transmembrane segment spans residues 104–126 (EWSSVMRCVAVFVGINHASAKVD). Residues 127 to 129 (FDN) are Lumenal-facing. Residues 130–148 (NFQFSLTLAALSVGLWWTF) form a helical membrane-spanning segment. The Cytoplasmic portion of the chain corresponds to 149–153 (DRSRS). Position 151 is a phosphoserine (Ser151). Residues 154–175 (GFGLGVGIAFLATVVTQLLVYN) traverse the membrane as a helical segment. Residues 176–189 (GVYQYTSPDFLYVR) are Lumenal-facing. A helical transmembrane segment spans residues 190–207 (SWLPCIFFAGGITMGNIG). The Cytoplasmic portion of the chain corresponds to 208–225 (RQLAMYECKVIAEKSHQE). Position 215 is a cysteine sulfenic acid (-SOH); alternate (Cys215). A Glycyl cysteine thioester (Cys-Gly) (interchain with G-Cter in ubiquitin); alternate cross-link involves residue Cys215. The KxHxx motif lies at 219 to 225 (AEKSHQE).

The protein belongs to the INSIG family. In terms of assembly, interacts with SCAP; interaction is direct and only takes place in the presence of sterols; it prevents interaction between SCAP and the coat protein complex II (COPII). Associates with the SCAP-SREBP complex (composed of SCAP and SREBF1/SREBP1 or SREBF2/SREBP2); association is mediated via its interaction with SCAP and only takes place in the presence of sterols. Interacts with RNF139. Interacts with RNF145. In terms of processing, phosphorylation at Ser-151 by PCK1 reduces binding to oxysterol, disrupting the interaction between INSIG2 and SCAP, thereby promoting nuclear translocation of SREBP proteins (SREBF1/SREBP1 or SREBF2/SREBP2) and subsequent transcription of downstream lipogenesis-related genes. Polyubiquitinated by AMFR/gp78 at Cys-215 in some tissues such as adipose tissues, undifferentiated myoblasts and liver, leading to its degradation. In differentiated myotubes, Cys-215 oxidation prevents ubiquitination at the same site, resulting in protein stabilization. Post-translationally, oxidized at Cys-215 in differentiated myotubes, preventing ubiquitination at the same site, and resulting in protein stabilization. Expressed in liver, testis, kidney, spleen, intestine, brain and adrenal gland.

The protein resides in the endoplasmic reticulum membrane. Oxysterol-binding protein that mediates feedback control of cholesterol synthesis by controlling both endoplasmic reticulum to Golgi transport of SCAP and degradation of HMGCR. Acts as a negative regulator of cholesterol biosynthesis by mediating the retention of the SCAP-SREBP complex in the endoplasmic reticulum, thereby blocking the processing of sterol regulatory element-binding proteins (SREBPs) SREBF1/SREBP1 and SREBF2/SREBP2. Binds oxysterol, including 22-hydroxycholesterol, 24-hydroxycholesterol, 25-hydroxycholesterol and 27-hydroxycholesterol, regulating interaction with SCAP and retention of the SCAP-SREBP complex in the endoplasmic reticulum. In presence of oxysterol, interacts with SCAP, retaining the SCAP-SREBP complex in the endoplasmic reticulum, thereby preventing SCAP from escorting SREBF1/SREBP1 and SREBF2/SREBP2 to the Golgi. Sterol deprivation or phosphorylation by PCK1 reduce oxysterol-binding, disrupting the interaction between INSIG2 and SCAP, thereby promoting Golgi transport of the SCAP-SREBP complex, followed by processing and nuclear translocation of SREBF1/SREBP1 and SREBF2/SREBP2. Also regulates cholesterol synthesis by regulating degradation of HMGCR: initiates the sterol-mediated ubiquitin-mediated endoplasmic reticulum-associated degradation (ERAD) of HMGCR via recruitment of the reductase to the ubiquitin ligase RNF139. The sequence is that of Insulin-induced gene 2 protein from Mus musculus (Mouse).